A 359-amino-acid polypeptide reads, in one-letter code: MRVLGIETSCDETAAAIVERDDMGEGRILSNVVLSQIAEHEPYGGVVPEIAARAHVEALDRLVDRALNDAGLKLYEVDAVAATAGPGLIGGLIVGLMTAKALAMAAQKPFYAVNHLEGHALTARLTDGLPFPYLLLLVSGGHTQMVLVRGIGDYERLGTTIDDALGEAFDKTAKLLGLPYPGGPAVERMALQGDQKRFALPRPLKGEARLDFSFSGLKTAVRQTATELVPLTDQDVTDICASFQAAVADTLSDRVGRSLERFKTEFPDCATPSLVVAGGVAANKTLRAALENLCTRHGFAFIAPPLNLCTDNAAMIAWAGAERAATQAPDSLDIAPRSRWPLDEKSAPVFGTGRRGAKA.

The Fe cation site is built by His-115 and His-119. Residues Leu-137 to Gly-141, Asp-170, Gly-183, and Asn-283 each bind substrate. Asp-311 lines the Fe cation pocket. Positions Ala-328–Ala-359 are disordered.

The protein belongs to the KAE1 / TsaD family. Fe(2+) serves as cofactor.

The protein localises to the cytoplasm. The enzyme catalyses L-threonylcarbamoyladenylate + adenosine(37) in tRNA = N(6)-L-threonylcarbamoyladenosine(37) in tRNA + AMP + H(+). Required for the formation of a threonylcarbamoyl group on adenosine at position 37 (t(6)A37) in tRNAs that read codons beginning with adenine. Is involved in the transfer of the threonylcarbamoyl moiety of threonylcarbamoyl-AMP (TC-AMP) to the N6 group of A37, together with TsaE and TsaB. TsaD likely plays a direct catalytic role in this reaction. The sequence is that of tRNA N6-adenosine threonylcarbamoyltransferase from Brucella melitensis biotype 2 (strain ATCC 23457).